The chain runs to 628 residues: Inactive sodium-dependent neutral amino acid transporter B(0)AT3 (628 aa).

Residues 1–26 (MAHAPEPDPAACDLGDERPKWDNKAQ) are Cytoplasmic-facing. The chain crosses the membrane as a helical span at residues 27–47 (YLLSCTGFAVGLGNIWRFPYL). Over 48–51 (CQTY) the chain is Extracellular. A helical transmembrane segment spans residues 52–74 (GGGAFLIPYVIALVFEGIPIFHV). Topologically, residues 75-88 (ELAIGQRLRKGSVG) are cytoplasmic. The chain crosses the membrane as a helical span at residues 89-111 (VWTAISPYLSGVGLGCVTLSFLI). Over 112 to 178 (SLYYNTIVAW…ITADINDSGS (67 aa)) the chain is Extracellular. Asn-144, Asn-168, and Asn-174 each carry an N-linked (GlcNAc...) asparagine glycan. Residues 179–201 (IQWWLLICLAASWAVVYMCVIRG) form a helical membrane-spanning segment. Topologically, residues 202–207 (IETTGK) are cytoplasmic. A helical membrane pass occupies residues 208–230 (VIYFTALFPYLVLTIFLIRGLTL). Residues 231–253 (PGATKGLIYLFTPNMHILQNPRV) are Extracellular-facing. Residues 254–276 (WLDAATQIFFSLSLAFGGHIAFA) traverse the membrane as a helical segment. At 277–288 (SYNSPRNDCQKD) the chain is on the cytoplasmic side. The chain crosses the membrane as a helical span at residues 289-311 (AVVIALVNRMTSLYASIAVFSVL). At 312-399 (GFKATNDYEH…TETDLHMPGA (88 aa)) the chain is on the extracellular side. Asn-354 carries N-linked (GlcNAc...) asparagine glycosylation. A helical transmembrane segment spans residues 400-422 (PVWAMLFFGMLFTLGLSTMFGTV). At 423–442 (EAVITPLLDVGVLPRWVPKE) the chain is on the cytoplasmic side. The chain crosses the membrane as a helical span at residues 443–465 (ALTGLVCLVCFLSATCFTLQSGN). Over 466–474 (YWLEIFDNF) the chain is Extracellular. A helical membrane pass occupies residues 475–497 (AASPNLLMLAFLEVVGVVYVYGM). Residues 498-517 (KRFCDDIAWMTGRRPSPYWR) lie on the Cytoplasmic side of the membrane. A helical transmembrane segment spans residues 518 to 540 (LTWRVVSPLLLTIFVAYIILLFW). Over 541-568 (KPLRYKAWNPKYELFPSRQEKLYPGWAR) the chain is Extracellular. The helical transmembrane segment at 569 to 591 (AACVLLSLLPVLWVPVAALAQLL) threads the bilayer. At 592–628 (TRRRRTWRDRDARPDTDMRPDTDTRPDTDMRPDTDMR) the chain is on the cytoplasmic side. Residues 602–628 (DARPDTDMRPDTDTRPDTDMRPDTDMR) form a disordered region.

This sequence belongs to the sodium:neurotransmitter symporter (SNF) (TC 2.A.22) family. SLC6A18 subfamily. In terms of tissue distribution, abundantly expressed in kidney, but not in intestine.

The protein localises to the membrane. Its function is as follows. Does not show neutral amino acid transporter activity. The sequence is that of Inactive sodium-dependent neutral amino acid transporter B(0)AT3 from Homo sapiens (Human).